A 954-amino-acid chain; its full sequence is Kinesin-like protein KIN-14A (954 aa).

A Calponin-homology (CH) domain is found at 24–142; it reads ALRRHQAATW…CVISLKSYHE (119 aa). Residues 242–293 are a coiled coil; that stretch reads LSRQLEKEQSSNSQVENRRRLLQAQESELLELKSMFQEVKIDFRTLKTQFQD. The Kinesin motor domain occupies 332–651; it reads NIRVFCRIRP…LKFAQRASCV (320 aa). Residue 413–420 coordinates ATP; that stretch reads GQTGSGKT. Residues 656-692 are a coiled coil; that stretch reads AHANKESNEIRELKEQVENLKRALAAKELEKSSFKLK. The segment covering 697 to 709 has biased composition (basic and acidic residues); sequence VRERAKQVPERTP. Disordered regions lie at residues 697–743, 824–858, and 882–954; these read VRER…TKLN, NLEVGQTDEPSSSAKLEKMTSSNATKKGSHLRKSI, and PAKI…KRWL. Polar residues-rich tracts occupy residues 831–849 and 886–898; these read DEPSSSAKLEKMTSSNATK and ANSTNNDVPSSIT.

The protein belongs to the TRAFAC class myosin-kinesin ATPase superfamily. Kinesin family. KIN-14 subfamily.

The polypeptide is Kinesin-like protein KIN-14A (Oryza sativa subsp. japonica (Rice)).